The following is a 102-amino-acid chain: Small ribosomal subunit protein uS10 (102 aa).

This sequence belongs to the universal ribosomal protein uS10 family. As to quaternary structure, part of the 30S ribosomal subunit.

Involved in the binding of tRNA to the ribosomes. This is Small ribosomal subunit protein uS10 from Pelobacter propionicus (strain DSM 2379 / NBRC 103807 / OttBd1).